The sequence spans 434 residues: Alpha-enolase (434 aa).

Serine 40 contacts Mg(2+). 2 residues coordinate substrate: histidine 158 and glutamate 167. Glutamate 210 acts as the Proton donor in catalysis. Positions 245, 293, and 318 each coordinate Mg(2+). Residues glutamate 293 and aspartate 318 each coordinate substrate. Lysine 343 acts as the Proton acceptor in catalysis. Residues 370-373 (SHRS) and lysine 394 each bind substrate.

Belongs to the enolase family. Homodimer. Mg(2+) is required as a cofactor.

Its subcellular location is the cytoplasm. The enzyme catalyses (2R)-2-phosphoglycerate = phosphoenolpyruvate + H2O. It functions in the pathway carbohydrate degradation; glycolysis; pyruvate from D-glyceraldehyde 3-phosphate: step 4/5. The protein is Alpha-enolase (ENO1) of Gallus gallus (Chicken).